The sequence spans 290 residues: 33 kDa chaperonin (290 aa).

Disulfide bonds link C235/C237 and C268/C271.

Belongs to the HSP33 family. In terms of processing, under oxidizing conditions two disulfide bonds are formed involving the reactive cysteines. Under reducing conditions zinc is bound to the reactive cysteines and the protein is inactive.

Its subcellular location is the cytoplasm. Functionally, redox regulated molecular chaperone. Protects both thermally unfolding and oxidatively damaged proteins from irreversible aggregation. Plays an important role in the bacterial defense system toward oxidative stress. The chain is 33 kDa chaperonin from Streptococcus pyogenes serotype M49.